Reading from the N-terminus, the 348-residue chain is Dihydroorotate dehydrogenase (quinone) (348 aa).

FMN-binding positions include 60-64 and threonine 84; that span reads AGFDK. Lysine 64 provides a ligand contact to substrate. Position 109–113 (109–113) interacts with substrate; the sequence is NRLGF. Residues asparagine 138 and asparagine 169 each contribute to the FMN site. Asparagine 169 serves as a coordination point for substrate. The active-site Nucleophile is the serine 172. Residue asparagine 174 participates in substrate binding. The FMN site is built by lysine 207 and serine 235. 236 to 237 serves as a coordination point for substrate; the sequence is NT. Residues glycine 258, glycine 287, and 308–309 each bind FMN; that span reads YS.

It belongs to the dihydroorotate dehydrogenase family. Type 2 subfamily. In terms of assembly, monomer. Requires FMN as cofactor.

It is found in the cell membrane. The catalysed reaction is (S)-dihydroorotate + a quinone = orotate + a quinol. Its pathway is pyrimidine metabolism; UMP biosynthesis via de novo pathway; orotate from (S)-dihydroorotate (quinone route): step 1/1. Functionally, catalyzes the conversion of dihydroorotate to orotate with quinone as electron acceptor. The protein is Dihydroorotate dehydrogenase (quinone) of Parvibaculum lavamentivorans (strain DS-1 / DSM 13023 / NCIMB 13966).